The chain runs to 249 residues: 23S rRNA (guanosine-2'-O-)-methyltransferase RlmB (249 aa).

S-adenosyl-L-methionine is bound by residues G200, I220, and L229.

It belongs to the class IV-like SAM-binding methyltransferase superfamily. RNA methyltransferase TrmH family. RlmB subfamily.

It is found in the cytoplasm. It catalyses the reaction guanosine(2251) in 23S rRNA + S-adenosyl-L-methionine = 2'-O-methylguanosine(2251) in 23S rRNA + S-adenosyl-L-homocysteine + H(+). Its function is as follows. Specifically methylates the ribose of guanosine 2251 in 23S rRNA. The protein is 23S rRNA (guanosine-2'-O-)-methyltransferase RlmB of Xylella fastidiosa (strain Temecula1 / ATCC 700964).